A 194-amino-acid polypeptide reads, in one-letter code: Molybdenum cofactor guanylyltransferase (194 aa).

GTP-binding positions include 12–14, K25, N53, D70, and D100; that span reads LAG. D100 lines the Mg(2+) pocket.

It belongs to the MobA family. As to quaternary structure, monomer. The cofactor is Mg(2+).

The protein localises to the cytoplasm. The enzyme catalyses Mo-molybdopterin + GTP + H(+) = Mo-molybdopterin guanine dinucleotide + diphosphate. Functionally, transfers a GMP moiety from GTP to Mo-molybdopterin (Mo-MPT) cofactor (Moco or molybdenum cofactor) to form Mo-molybdopterin guanine dinucleotide (Mo-MGD) cofactor. The protein is Molybdenum cofactor guanylyltransferase of Aliivibrio fischeri (strain MJ11) (Vibrio fischeri).